The sequence spans 106 residues: MNDSEFHQLADTLMLKVEETLDQFDGDADIDYETNGGVMTLSFENGSKIVINRQEPMHQVWLATKGGGYHFDYQHGRWICDRSGSDFMALLAQACTEQSGEEIHFD.

The protein belongs to the frataxin family.

In terms of biological role, involved in iron-sulfur (Fe-S) cluster assembly. May act as a regulator of Fe-S biogenesis. This chain is Iron-sulfur cluster assembly protein CyaY, found in Dickeya chrysanthemi (Pectobacterium chrysanthemi).